The chain runs to 402 residues: MADPKYADLPGIARNEPDVYETSDLPEDDQAEFEAELEELTSTSVEHLIINPNAAFEKFKDKRLGTDGVDFSDRISKSRTTGYESGEYEILGEGLGAKETPQQRYQRLQHEVQELIRDVEQIQSAVKESAAEEELTPMALARQLEGLKQQLVSCHLQKLLGPTAAIDFADPEGALAKRLQQQLEVPSVKKAAPAKSPPKAPGPTTDALTFELFWRRPEQDQFSQTAKIAELEKRLAQLEAMVRCEPDSQNPLLVGAEGTSLVETVQILQAKVNILDAAVLDQVEARLQRRPGSKVNEIAKHKAIVQDADTQSKIHQVVYEMMQRWDHMASSLPDVVQRLLTLRDLHEQASRFVQVLVHLDTTQQEVDVVQRLLAEVQKTMKENLAVVEDNFAEVEARIKRLQ.

The disordered stretch occupies residues 1–26 (MADPKYADLPGIARNEPDVYETSDLP). Coiled coils occupy residues 101–132 (PQQR…SAAE) and 357–402 (VHLD…KRLQ).

It belongs to the dynactin subunit 2 family. In terms of assembly, subunit of dynactin, a multiprotein complex part of a tripartite complex with dynein and a adapter, such as BICDL1, BICD2 or HOOK3. The dynactin complex is built around ACTR1A/ACTB filament and consists of an actin-related filament composed of a shoulder domain, a pointed end and a barbed end. Its length is defined by its flexible shoulder domain. The soulder is composed of 2 DCTN1 subunits, 4 DCTN2 and 2 DCTN3.

It is found in the cytoplasm. The protein localises to the cytoskeleton. Its subcellular location is the microtubule organizing center. It localises to the centrosome. The protein resides in the membrane. Its function is as follows. Part of the dynactin complex that activates the molecular motor dynein for ultra-processive transport along microtubules. In the dynactin soulder domain, binds the ACTR1A filament and acts as a molecular ruler to determine the length. Modulates cytoplasmic dynein binding to an organelle, and plays a role in prometaphase chromosome alignment and spindle organization during mitosis. Involved in anchoring microtubules to centrosomes. The chain is Dynactin subunit 2 (DCTN2) from Gallus gallus (Chicken).